Reading from the N-terminus, the 310-residue chain is TLC domain-containing protein 2 (310 aa).

Transmembrane regions (helical) follow at residues 6 to 26 (LLVAGASFTAFRGLHWGLQLL), 40 to 60 (NIFVSLIHSLLSGVGALVGLW), 79 to 99 (VLVAVSVGYFAADGVDMLWNQ), 117 to 137 (CLSTAVVSGHYVGFSMVSLLL), 167 to 187 (ASLATLVLFRLLPLGWMSLWL), and 194 to 214 (LSLALVLLCVAGLVTVGSISI). A TLC domain is found at 33-227 (RDRWMWRNIF…IRILTKDILQ (195 aa)).

The protein belongs to the TLCD family.

The protein resides in the cell membrane. In terms of biological role, regulates the composition and fluidity of the plasma membrane. Inhibits the incorporation of membrane-fluidizing phospholipids containing omega-3 long-chain polyunsaturated fatty acids (LCPUFA) and thereby promotes membrane rigidity. Does not appear to have any effect on LCPUFA synthesis. The polypeptide is TLC domain-containing protein 2 (Tlcd2) (Mus musculus (Mouse)).